The following is a 2050-amino-acid chain: Unconventional myosin-XVIIIa (2050 aa).

Basic and acidic residues-rich tracts occupy residues 1–17 and 23–34; these read MFNL…GRKE and EKKERMSAAELR. The segment at 1–34 is disordered; it reads MFNLMKKDKDKDGGRKEKKEKKEKKERMSAAELR. Positions 1–398 are mediates nucleotide-independent binding to F-actin and interaction with GOLPH3; the sequence is MFNLMKKDKD…LDVDEDDIEK (398 aa). A phosphoserine mark is found at Ser35, Ser52, Ser72, and Ser74. A Phosphothreonine modification is found at Thr79. Phosphoserine is present on residues Ser83 and Ser98. Thr99 bears the Phosphothreonine mark. A phosphoserine mark is found at Ser102 and Ser103. Positions 114-118 match the Interaction with actin motif; the sequence is RGSVL. Residues Ser140, Ser145, Ser157, Ser160, Ser164, Ser234, and Ile340 each carry the phosphoserine modification. Residues 140–167 are disordered; sequence SFSQRSRDESASETSTPSEHSAAPSPQV. The region spanning 220–311 is the PDZ domain; it reads ELELQRRPTG…SVRLKVQPIP (92 aa). The Myosin N-terminal SH3-like domain occupies 349–401; it reads TEKVWLVHRDGFSLASQLKSEELSLPEGKARVKLDHDGAILDVDEDDIEKANA. The region spanning 405-1181 is the Myosin motor domain; that stretch reads DRLEDLASLV…TLARLEEQRD (777 aa). 498–505 contributes to the ATP binding site; sequence GSSGSGKT. Ser983, Ser1063, Ser1064, and Ser1066 each carry phosphoserine. Positions 1051–1071 are disordered; the sequence is PGEPRSASSRRVSSSSELDLP. Residues 1055 to 1066 are compositionally biased toward low complexity; the sequence is RSASSRRVSSSS. The IQ domain maps to 1184 to 1213; sequence TSRHLTLFQAACRGYLARQHFKKRKIQDLA. Residues 1242–1967 adopt a coiled-coil conformation; sequence LIQVQLSEEQ…KKNKLEGDSD (726 aa). The interval 1448–1477 is disordered; it reads RNHELEKKQRRFDSELSQAHEETQREKLQR. Ser1636 carries the phosphoserine modification. Residues 1848–1897 form a disordered region; sequence MEKLTEERDQRAAAENREKEQNKRLQRQLRDTKEEMSELARKEAEASRKK. Ser1938, Ser1966, Ser1970, Ser1994, Ser1998, Ser2002, Ser2003, Ser2016, Ser2032, Ser2037, and Ser2039 each carry phosphoserine. The disordered stretch occupies residues 1955–2050; that stretch reads YQKKKNKLEG…TEAKLTETSA (96 aa). The residue at position 2041 (Thr2041) is a Phosphothreonine. The segment covering 2041 to 2050 has biased composition (basic and acidic residues); that stretch reads TEAKLTETSA.

It belongs to the TRAFAC class myosin-kinesin ATPase superfamily. Myosin family. As to quaternary structure, homodimer. Forms a tripartite complex with CDC42BPA/CDC42BPB and LURAP1 with the latter acting as an adapter connecting CDC42BPA/CDC42BPB and MYO18A. Binds F-actin; regulated by ADP and GOLPH3. Interacts with GOLPH3; the interaction is direct and may link Golgi membranes to the actin cytoskeleton. Interacts with JAK3. Interacts with MSR1 and CD14. In terms of processing, phosphorylated on tyrosine upon CSF1R activation. Isoform 6 is phosphorylated on Ser-340. As to expression, isoform 1; Expressed ubiquitously. Isoform 2: Specifically expressed in most hematopoietic cells. Isoform 3: Predominantly expressed in alveolar macrophages.

It is found in the golgi apparatus. The protein resides in the trans-Golgi network. It localises to the golgi outpost. Its subcellular location is the cytoplasm. The protein localises to the cytoskeleton. It is found in the microtubule organizing center. The protein resides in the endoplasmic reticulum-Golgi intermediate compartment. Its function is as follows. May link Golgi membranes to the cytoskeleton and participate in the tensile force required for vesicle budding from the Golgi. Thereby, may play a role in Golgi membrane trafficking and could indirectly give its flattened shape to the Golgi apparatus. Alternatively, in concert with LURAP1 and CDC42BPA/CDC42BPB, has been involved in modulating lamellar actomyosin retrograde flow that is crucial to cell protrusion and migration. May be involved in the maintenance of the stromal cell architectures required for cell to cell contact. Regulates trafficking, expression, and activation of innate immune receptors on macrophages. Plays a role to suppress inflammatory responsiveness of macrophages via a mechanism that modulates CD14 trafficking. Acts as a receptor of surfactant-associated protein A (SFTPA1/SP-A) and plays an important role in internalization and clearance of SFTPA1-opsonized S.aureus by alveolar macrophages. Strongly enhances natural killer cell cytotoxicity. This Mus musculus (Mouse) protein is Unconventional myosin-XVIIIa (Myo18a).